The primary structure comprises 1393 residues: DNA-directed RNA polymerase subunit beta' (1393 aa).

Residues Cys72, Cys74, Cys87, and Cys90 each coordinate Zn(2+). Positions 463, 465, and 467 each coordinate Mg(2+). 4 residues coordinate Zn(2+): Cys812, Cys887, Cys894, and Cys897.

The protein belongs to the RNA polymerase beta' chain family. The RNAP catalytic core consists of 2 alpha, 1 beta, 1 beta' and 1 omega subunit. When a sigma factor is associated with the core the holoenzyme is formed, which can initiate transcription. The cofactor is Mg(2+). Requires Zn(2+) as cofactor.

It carries out the reaction RNA(n) + a ribonucleoside 5'-triphosphate = RNA(n+1) + diphosphate. Its function is as follows. DNA-dependent RNA polymerase catalyzes the transcription of DNA into RNA using the four ribonucleoside triphosphates as substrates. The protein is DNA-directed RNA polymerase subunit beta' of Chlamydia caviae (strain ATCC VR-813 / DSM 19441 / 03DC25 / GPIC) (Chlamydophila caviae).